The sequence spans 179 residues: ADP-ribosylation factor-like protein 5A (179 aa).

The N-myristoyl glycine moiety is linked to residue glycine 2. Residues 23–30 (GLDNAGKT), 66–70 (DIGGQ), 125–128 (NKQD), and alanine 159 contribute to the GTP site.

Belongs to the small GTPase superfamily. Arf family.

In terms of biological role, lacks ADP-ribosylation enhancing activity. The sequence is that of ADP-ribosylation factor-like protein 5A (ARL5A) from Bos taurus (Bovine).